Here is a 308-residue protein sequence, read N- to C-terminus: Aspartate carbamoyltransferase catalytic subunit (308 aa).

Arginine 57 and threonine 58 together coordinate carbamoyl phosphate. Lysine 86 contacts L-aspartate. 3 residues coordinate carbamoyl phosphate: arginine 107, histidine 135, and glutamine 138. Residues arginine 167 and arginine 228 each contribute to the L-aspartate site. Carbamoyl phosphate-binding residues include leucine 267 and proline 268.

The protein belongs to the aspartate/ornithine carbamoyltransferase superfamily. ATCase family. In terms of assembly, heterooligomer of catalytic and regulatory chains.

The enzyme catalyses carbamoyl phosphate + L-aspartate = N-carbamoyl-L-aspartate + phosphate + H(+). It participates in pyrimidine metabolism; UMP biosynthesis via de novo pathway; (S)-dihydroorotate from bicarbonate: step 2/3. Functionally, catalyzes the condensation of carbamoyl phosphate and aspartate to form carbamoyl aspartate and inorganic phosphate, the committed step in the de novo pyrimidine nucleotide biosynthesis pathway. The sequence is that of Aspartate carbamoyltransferase catalytic subunit from Methanosarcina acetivorans (strain ATCC 35395 / DSM 2834 / JCM 12185 / C2A).